Consider the following 326-residue polypeptide: mRNA decay activator protein ZFP36 (326 aa).

Residues 1–15 are necessary for nuclear export; it reads MDLTAIYESLLSLSP. A necessary and sufficient for the association with mRNA decay enzymes and mRNA decay activation region spans residues 1-100; it reads MDLTAIYESL…PTSPTATSTT (100 aa). Necessary for localization of ARE-containing mRNAs to processing bodies (PBs) stretches follow at residues 1-174 and 100-326; these read MDLT…DLAA and TPSR…SVSE. The interval 13–66 is disordered; the sequence is LSPDVPVPSDHGGTESSPGWGSSGPWSLSPSDSSPSGVTSRLPGRSTSLVEGRS. Over residues 28–49 the composition is skewed to low complexity; that stretch reads SSPGWGSSGPWSLSPSDSSPSG. Serine 60 is subject to Phosphoserine; by MAPKAPK2. The residue at position 66 (serine 66) is a Phosphoserine. A P-P-P-P-G repeat occupies 71-75; the sequence is PPPPG. Positions 78-102 are disordered; that stretch reads PLAPRLGPELSPSPTSPTATSTTPS. 2 positions are modified to phosphoserine: serine 88 and serine 90. Threonine 92 bears the Phosphothreonine mark. At serine 93 the chain carries Phosphoserine. A necessary for nuclear localization region spans residues 95 to 168; it reads TATSTTPSRY…GSRCHFIHNP (74 aa). Positions 97 to 173 are necessary for RNA-binding; it reads TSTTPSRYKT…FIHNPSEDLA (77 aa). C3H1-type zinc fingers lie at residues 103-131 and 141-169; these read RYKT…HGLG and KYKT…HNPS. Residues 103-194 are necessary for interaction with PABPN1; it reads RYKTELCRTF…ISFSGLPSGR (92 aa). Serine 169 bears the Phosphoserine mark. The interval 174–326 is necessary for mRNA decay activation; it reads APGHPPVLRQ…PIFNRISVSE (153 aa). Disordered stretches follow at residues 175–245 and 273–292; these read PGHP…RRDP and SVQS…SSLG. The residue at position 186 (serine 186) is a Phosphoserine; by MAPKAPK2. At serine 197 the chain carries Phosphoserine. A P-P-P-P-G repeat occupies 198 to 202; sequence PPPPG. Residues 204–216 are compositionally biased toward low complexity; it reads AGPSLSSSSFSPS. Phosphoserine is present on serine 218. One copy of the P-P-P-P-G repeat lies at 219 to 223; that stretch reads PPPPG. A Phosphoserine; by MAPK1; in vitro modification is found at serine 228. Phosphoserine is present on residues serine 276, serine 296, and serine 323. The interval 312–326 is interaction with CNOT1; sequence APRRLPIFNRISVSE.

In terms of assembly, associates with cytoplasmic CCR4-NOT and PAN2-PAN3 deadenylase complexes to trigger ARE-containing mRNA deadenylation and decay processes. Part of a mRNA decay activation complex at least composed of poly(A)-specific exoribonucleases CNOT6, EXOSC2 and XRN1 and mRNA-decapping enzymes DCP1A and DCP2. Associates with the RNA exosome complex. Interacts (via phosphorylated form) with 14-3-3 proteins; these interactions promote exclusion of ZFP36 from cytoplasmic stress granules in response to arsenite treatment in a MAPKAPK2-dependent manner and does not prevent CCR4-NOT deadenylase complex recruitment or ZFP36-induced ARE-containing mRNA deadenylation and decay processes. Interacts with 14-3-3 proteins; these interactions occur in response to rapamycin in an Akt-dependent manner. Interacts with AGO2 and AGO4. Interacts (via C-terminus) with CNOT1; this interaction occurs in a RNA-independent manner and induces mRNA deadenylation. Interacts (via N-terminus) with CNOT6. Interacts with CNOT6L. Interacts (via C-terminus) with CNOT7; this interaction occurs in a RNA-independent manner, induces mRNA deadenylation and is inhibited in a phosphorylation MAPKAPK2-dependent manner. Interacts (via unphosphorylated form) with CNOT8; this interaction occurs in a RNA-independent manner and is inhibited in a phosphorylation MAPKAPK2-dependent manner. Interacts with DCP1A. Interacts (via N-terminus) with DCP2. Interacts with EDC3. Interacts (via N-terminus) with EXOSC2. Interacts with heat shock 70 kDa proteins. Interacts with KHSRP; this interaction increases upon cytokine-induced treatment. Interacts with MAP3K4; this interaction enhances the association with SH3KBP1/CIN85. Interacts with MAPKAPK2; this interaction occurs upon skeletal muscle satellite cell activation. Interacts with NCL. Interacts with NUP214; this interaction increases upon lipopolysaccharide (LPS) stimulation. Interacts with PABPC1; this interaction occurs in a RNA-dependent manner. Interacts (via hypophosphorylated form) with PABPN1 (via RRM domain and C-terminal arginine-rich region); this interaction occurs in the nucleus in a RNA-independent manner, decreases in presence of single-stranded poly(A) RNA-oligomer and in a p38 MAPK-dependent-manner and inhibits nuclear poly(A) tail synthesis. Interacts with PAN2. Interacts (via C3H1-type zinc finger domains) with PKM. Interacts (via C3H1-type zinc finger domains) with nuclear RNA poly(A) polymerase. Interacts with PPP2CA; this interaction occurs in LPS-stimulated cells and induces ZFP36 dephosphorylation, and hence may promote ARE-containing mRNAs decay. Interacts (via C-terminus) with PRR5L (via C-terminus); this interaction may accelerate ZFP36-mediated mRNA decay during stress. Interacts (via C-terminus) with SFN; this interaction occurs in a phosphorylation-dependent manner. Interacts (via extreme C-terminal region) with SH3KBP1/CIN85 (via SH3 domains); this interaction enhances MAP3K4-induced phosphorylation of ZFP36 at Ser-66 and Ser-93 and does not alter neither ZFP36 binding to ARE-containing transcripts nor TNF-alpha mRNA decay. Interacts with XRN1. Interacts (via C-terminus and Ser-186 phosphorylated form) with YWHAB; this interaction occurs in a p38/MAPKAPK2-dependent manner, increases cytoplasmic localization of ZFP36 and protects ZFP36 from Ser-186 dephosphorylation by serine/threonine phosphatase 2A, and hence may be crucial for stabilizing ARE-containing mRNAs. Interacts (via phosphorylated form) with YWHAE. Interacts (via C-terminus) with YWHAG; this interaction occurs in a phosphorylation-dependent manner. Interacts with YWHAH; this interaction occurs in a phosphorylation-dependent manner. Interacts with YWHAQ; this interaction occurs in a phosphorylation-dependent manner. Interacts with (via C-terminus) YWHAZ; this interaction occurs in a phosphorylation-dependent manner. Interacts (via P-P-P-P-G repeats) with GIGYF2; the interaction is direct. (Microbial infection) Interacts (via C-terminus) with HTLV-1 TAX (via C-terminus); this interaction inhibits HTLV-1 TAX to transactivate viral long terminal repeat (LTR) promoter. Post-translationally, phosphorylated. Phosphorylation at serine and/or threonine residues occurs in a p38 MAPK- and MAPKAPK2-dependent manner. Phosphorylated by MAPKAPK2 at Ser-60 and Ser-186; phosphorylation increases its stability and cytoplasmic localization, promotes binding to 14-3-3 adapter proteins and inhibits the recruitment of cytoplasmic CCR4-NOT and PAN2-PAN3 deadenylase complexes to the mRNA decay machinery, thereby inhibiting ZFP36-induced ARE-containing mRNA deadenylation and decay processes. Phosphorylation by MAPKAPK2 does not impair ARE-containing RNA-binding. Phosphorylated in a MAPKAPK2- and p38 MAPK-dependent manner upon skeletal muscle satellite cell activation; this phosphorylation inhibits ZFP36-mediated mRNA decay activity, and hence stabilizes MYOD1 mRNA. Phosphorylated by MAPK1 upon mitogen stimulation. Phosphorylated at Ser-66 and Ser-93; these phosphorylations increase in a SH3KBP1-dependent manner. Phosphorylated at serine and threonine residues in a pyruvate kinase PKM- and p38 MAPK-dependent manner. Phosphorylation at Ser-60 may participate in the PKM-mediated degradation of ZFP36 in a p38 MAPK-dependent manner. Dephosphorylated by serine/threonine phosphatase 2A at Ser-186. In terms of processing, ubiquitinated; pyruvate kinase (PKM)-dependent ubiquitination leads to proteasomal degradation through a p38 MAPK signaling pathway. Expressed in both basal and suprabasal epidermal layers. Expressed in epidermal keratinocytes. Expressed strongly in mature dendritic cells. Expressed in immature dendritic cells (at protein level).

The protein localises to the nucleus. The protein resides in the cytoplasm. It is found in the cytoplasmic granule. Its subcellular location is the P-body. Functionally, zinc-finger RNA-binding protein that destabilizes several cytoplasmic AU-rich element (ARE)-containing mRNA transcripts by promoting their poly(A) tail removal or deadenylation, and hence provide a mechanism for attenuating protein synthesis. Acts as an 3'-untranslated region (UTR) ARE mRNA-binding adapter protein to communicate signaling events to the mRNA decay machinery. Recruits deadenylase CNOT7 (and probably the CCR4-NOT complex) via association with CNOT1, and hence promotes ARE-mediated mRNA deadenylation. Functions also by recruiting components of the cytoplasmic RNA decay machinery to the bound ARE-containing mRNAs. Self regulates by destabilizing its own mRNA. Binds to 3'-UTR ARE of numerous mRNAs and of its own mRNA. Plays a role in anti-inflammatory responses; suppresses tumor necrosis factor (TNF)-alpha production by stimulating ARE-mediated TNF-alpha mRNA decay and several other inflammatory ARE-containing mRNAs in interferon (IFN)- and/or lipopolysaccharide (LPS)-induced macrophages. Also plays a role in the regulation of dendritic cell maturation at the post-transcriptional level, and hence operates as part of a negative feedback loop to limit the inflammatory response. Promotes ARE-mediated mRNA decay of hypoxia-inducible factor HIF1A mRNA during the response of endothelial cells to hypoxia. Positively regulates early adipogenesis of preadipocytes by promoting ARE-mediated mRNA decay of immediate early genes (IEGs). Negatively regulates hematopoietic/erythroid cell differentiation by promoting ARE-mediated mRNA decay of the transcription factor STAT5B mRNA. Plays a role in maintaining skeletal muscle satellite cell quiescence by promoting ARE-mediated mRNA decay of the myogenic determination factor MYOD1 mRNA. Associates also with and regulates the expression of non-ARE-containing target mRNAs at the post-transcriptional level, such as MHC class I mRNAs. Participates in association with argonaute RISC catalytic components in the ARE-mediated mRNA decay mechanism; assists microRNA (miRNA) targeting ARE-containing mRNAs. May also play a role in the regulation of cytoplasmic mRNA decapping; enhances decapping of ARE-containing RNAs, in vitro. Involved in the delivery of target ARE-mRNAs to processing bodies (PBs). In addition to its cytosolic mRNA-decay function, affects nuclear pre-mRNA processing. Negatively regulates nuclear poly(A)-binding protein PABPN1-stimulated polyadenylation activity on ARE-containing pre-mRNA during LPS-stimulated macrophages. Also involved in the regulation of stress granule (SG) and P-body (PB) formation and fusion. Plays a role in the regulation of keratinocyte proliferation, differentiation and apoptosis. Plays a role as a tumor suppressor by inhibiting cell proliferation in breast cancer cells. (Microbial infection) Negatively regulates HTLV-1 TAX-dependent transactivation of viral long terminal repeat (LTR) promoter. The protein is mRNA decay activator protein ZFP36 of Homo sapiens (Human).